The chain runs to 147 residues: UPF0178 protein Nther_1836 (147 aa).

This sequence belongs to the UPF0178 family.

This Natranaerobius thermophilus (strain ATCC BAA-1301 / DSM 18059 / JW/NM-WN-LF) protein is UPF0178 protein Nther_1836.